Here is a 248-residue protein sequence, read N- to C-terminus: 2,3-bisphosphoglycerate-dependent phosphoglycerate mutase (248 aa).

Residues 10–17, 23–24, R62, 89–92, K100, 116–117, and 183–184 each bind substrate; these read RHGQSQWN, TG, ERHY, RR, and GN. The active-site Tele-phosphohistidine intermediate is H11. E89 acts as the Proton donor/acceptor in catalysis.

Belongs to the phosphoglycerate mutase family. BPG-dependent PGAM subfamily.

It catalyses the reaction (2R)-2-phosphoglycerate = (2R)-3-phosphoglycerate. Its pathway is carbohydrate degradation; glycolysis; pyruvate from D-glyceraldehyde 3-phosphate: step 3/5. In terms of biological role, catalyzes the interconversion of 2-phosphoglycerate and 3-phosphoglycerate. The chain is 2,3-bisphosphoglycerate-dependent phosphoglycerate mutase from Corynebacterium kroppenstedtii (strain DSM 44385 / JCM 11950 / CIP 105744 / CCUG 35717).